The primary structure comprises 83 residues: MMGSMVSNGYLLLFTCWFLFVFGLMTIFNFVEIPLYVDGDVSPIRSYYPCILILTCTVVFFVWLFFNWLGLKYFRHSPSAMRR.

This is an uncharacterized protein from Schizosaccharomyces pombe (strain 972 / ATCC 24843) (Fission yeast).